Reading from the N-terminus, the 563-residue chain is NADPH oxidase 1 (563 aa).

Residues 1–8 (MGNWLVNH) are Cytoplasmic-facing. A helical transmembrane segment spans residues 9 to 31 (WLSVLFLVSWLGLNIFLFVYVFL). Over 32–44 (NYEKSDKYYYTRE) the chain is Extracellular. Residues 45–69 (ILGTALALARASALCLNFNSMVILI) form a helical membrane-spanning segment. One can recognise a Ferric oxidoreductase domain in the interval 54-282 (RASALCLNFN…LAPIAFYIFE (229 aa)). The Cytoplasmic portion of the chain corresponds to 70–102 (PVCRNLLSFLRGTCSFCNHTLRKPLDHNLTFHK). The heme site is built by histidine 101 and histidine 115. The helical transmembrane segment at 103 to 123 (LVAYMICIFTAIHIIAHLFNF) threads the bilayer. Residues 124–167 (ERYSRSQQAMDGSLASVLSSLFHPEKEDSWLNPIQSPNVTVMYA) are Extracellular-facing. Asparagine 161 carries an N-linked (GlcNAc...) asparagine glycan. The chain crosses the membrane as a helical span at residues 168–188 (AFTSIAGLTGVVATVALVLMV). Residues 189-206 (TSAMEFIRRNYFELFWYT) are Cytoplasmic-facing. Residues 207 to 227 (HHLFIIYIICLGIHGLGGIVR) traverse the membrane as a helical segment. Heme contacts are provided by histidine 208 and histidine 220. Over 228 to 395 (GQTEESMSES…TVSEDVFQYE (168 aa)) the chain is Extracellular. N-linked (GlcNAc...) asparagine glycosylation is present at asparagine 241. One can recognise an FAD-binding FR-type domain in the interval 283–390 (RILRFYRSRQ…DGPFGTVSED (108 aa)). 337-343 (HPFTLTS) contributes to the FAD binding site. The helical transmembrane segment at 396-416 (VAVLVGAGIGVTPFASFLKSI) threads the bilayer. The tract at residues 396–535 (VAVLVGAGIG…GVFLCGPPTL (140 aa)) is interaction with NOXO1. Residues 417 to 563 (WYKFQRAHNK…VQFYFNKETF (147 aa)) lie on the Cytoplasmic side of the membrane. Threonine 429 carries the post-translational modification Phosphothreonine; by PKC/PRKCB.

In terms of assembly, NOX1, NOXA1, NOXO1, RAC1 and CYBA forms a functional multimeric complex supporting ROS production. Interacts with NOXO1. Interacts (via FAD-binding FR-type domain) with ARHGEF7 (via PH domain). The phosphorylated form at Thr-429 interacts with NOXA1 with greater affinity. Requires FAD as cofactor. Phosphorylation at Thr-429 mediated by PKC/PRKBC positively regulates its interaction with NOXA1 and enzyme activity. In terms of tissue distribution, expressed in vascular smooth muscle cells.

The protein localises to the cell projection. It is found in the invadopodium membrane. Its subcellular location is the cell membrane. The catalysed reaction is NADPH + 2 O2 = 2 superoxide + NADP(+) + H(+). The oxidase activity is potentiated by NOXA1 and NOXO1. Functionally, NADPH oxidase that catalyzes the generation of superoxide from molecular oxygen utilizing NADPH as an electron donor. The protein is NADPH oxidase 1 (Nox1) of Rattus norvegicus (Rat).